The primary structure comprises 373 residues: tRNA-specific 2-thiouridylase MnmA (373 aa).

ATP-binding positions include 12–19 (GMSGGVDS) and M38. Residues 98-100 (NPD) form an interaction with target base in tRNA region. C103 serves as the catalytic Nucleophile. C103 and C200 are joined by a disulfide. Residue G127 participates in ATP binding. The tract at residues 150 to 152 (KDQ) is interaction with tRNA. C200 functions as the Cysteine persulfide intermediate in the catalytic mechanism. Residues 312–313 (RY) form an interaction with tRNA region.

It belongs to the MnmA/TRMU family.

The protein localises to the cytoplasm. The catalysed reaction is S-sulfanyl-L-cysteinyl-[protein] + uridine(34) in tRNA + AH2 + ATP = 2-thiouridine(34) in tRNA + L-cysteinyl-[protein] + A + AMP + diphosphate + H(+). Functionally, catalyzes the 2-thiolation of uridine at the wobble position (U34) of tRNA, leading to the formation of s(2)U34. This Streptococcus thermophilus (strain CNRZ 1066) protein is tRNA-specific 2-thiouridylase MnmA.